The following is a 212-amino-acid chain: Nuclear transcription factor Y subunit C-7 (212 aa).

The span at 1 to 10 shows a compositional bias: polar residues; that stretch reads MEENNGNNNH. Disordered regions lie at residues 1–23 and 190–212; these read MEEN…LPPP and EWPA…SGGN.

Belongs to the NFYC/HAP5 subunit family. In terms of assembly, heterotrimeric transcription factor composed of three components, NF-YA, NF-YB and NF-YC. NF-YB and NF-YC must interact and dimerize for NF-YA association and DNA binding. Expressed in flowers.

It localises to the nucleus. Stimulates the transcription of various genes by recognizing and binding to a CCAAT motif in promoters. The protein is Nuclear transcription factor Y subunit C-7 (NFYC7) of Arabidopsis thaliana (Mouse-ear cress).